A 513-amino-acid chain; its full sequence is ATP synthase subunit alpha (513 aa).

169 to 176 (GDRQVGKT) lines the ATP pocket.

Belongs to the ATPase alpha/beta chains family. As to quaternary structure, F-type ATPases have 2 components, CF(1) - the catalytic core - and CF(0) - the membrane proton channel. CF(1) has five subunits: alpha(3), beta(3), gamma(1), delta(1), epsilon(1). CF(0) has three main subunits: a(1), b(2) and c(9-12). The alpha and beta chains form an alternating ring which encloses part of the gamma chain. CF(1) is attached to CF(0) by a central stalk formed by the gamma and epsilon chains, while a peripheral stalk is formed by the delta and b chains.

Its subcellular location is the cell inner membrane. The catalysed reaction is ATP + H2O + 4 H(+)(in) = ADP + phosphate + 5 H(+)(out). Produces ATP from ADP in the presence of a proton gradient across the membrane. The alpha chain is a regulatory subunit. This Aeromonas hydrophila subsp. hydrophila (strain ATCC 7966 / DSM 30187 / BCRC 13018 / CCUG 14551 / JCM 1027 / KCTC 2358 / NCIMB 9240 / NCTC 8049) protein is ATP synthase subunit alpha.